A 251-amino-acid polypeptide reads, in one-letter code: MLLSLTHPSFLAMLPMLLMSNLLQWEGVTSASIHHIEDDYGEAYLKDLFDQAIKLSNDTMALTIEMRMIFFSDGFSSNMFRKIVLDFLKDHKHMIETLNSCHTFSLSVPETLEEARKISLEDFLKIIVSILNSWNKPLYHLETELHCMKGAPDAILIRANAIRTLNRELLETILMILSRVHPGMEENTDYPLWTDLASLQATNKERQFFALYKLFYCLRVDTFTVDHYLKYLMCMLYSDDICTSVKFYEDP.

The N-terminal stretch at 1 to 30 is a signal peptide; it reads MLLSLTHPSFLAMLPMLLMSNLLQWEGVTS. Asparagine 57 carries an N-linked (GlcNAc...) asparagine glycan. 2 disulfides stabilise this stretch: cysteine 101-cysteine 217 and cysteine 234-cysteine 242.

The protein belongs to the somatotropin/prolactin family. Expressed exclusively in the placenta. Expressed in spongiotrophoblast cells and trophoblast giant cells of the junctional zone and in labyrinthine trophoblast.

The protein localises to the secreted. The protein is Prolactin-7C1 (Prl7c1) of Mus musculus (Mouse).